The primary structure comprises 397 residues: Xylose isomerase (397 aa).

Active-site residues include His-54 and Asp-57. Residues Glu-181, Glu-217, His-220, Asp-245, Asp-255, Asp-257, and Asp-293 each coordinate Mg(2+).

It belongs to the xylose isomerase family. In terms of assembly, homotetramer. Requires Mg(2+) as cofactor.

It is found in the cytoplasm. The catalysed reaction is alpha-D-xylose = alpha-D-xylulofuranose. The sequence is that of Xylose isomerase from Clavibacter michiganensis subsp. michiganensis (strain NCPPB 382).